Here is a 265-residue protein sequence, read N- to C-terminus: Isoprenyl transferase (265 aa).

Asp-35 is an active-site residue. Mg(2+) is bound at residue Asp-35. Substrate-binding positions include 36–39 (GNGR), Trp-40, Arg-48, His-52, and 80–82 (SIE). The Proton acceptor role is filled by Asn-83. Residues Trp-84, Arg-86, Arg-203, and 209–211 (RIS) contribute to the substrate site. Glu-222 contributes to the Mg(2+) binding site.

Belongs to the UPP synthase family. Homodimer. Requires Mg(2+) as cofactor.

In terms of biological role, catalyzes the condensation of isopentenyl diphosphate (IPP) with allylic pyrophosphates generating different type of terpenoids. In Chlorobaculum tepidum (strain ATCC 49652 / DSM 12025 / NBRC 103806 / TLS) (Chlorobium tepidum), this protein is Isoprenyl transferase.